A 1032-amino-acid chain; its full sequence is Protein transport protein Sec24D (1032 aa).

A disordered region spans residues 1 to 260; sequence MSQQGYVATP…GPPQPQKKLD (260 aa). The segment covering 102 to 133 has biased composition (polar residues); it reads PSAQSSYPGPISTSSVTQLGSQLSAMQINSYG. Residues 198–212 show a composition bias toward pro residues; it reads GPPPPNAQYQPPPLP. Ser266 is subject to Phosphoserine. Cys363, Cys366, Cys385, and Cys388 together coordinate Zn(2+). The segment at 363 to 388 is zinc finger-like; that stretch reads CNRCKAYMCPFMQFIEGGRRYQCGFC. The stretch at 901–974 is one Gelsolin-like repeat; that stretch reads MLPAAVRCSE…PYSQQLRMIM (74 aa).

It belongs to the SEC23/SEC24 family. SEC24 subfamily. As to quaternary structure, COPII is composed of at least five proteins: the Sec23/24 complex, the Sec13/31 complex and Sar1. Interacts with TMED2 and TMED10. Interacts with CNIH4. Interacts with GOSR2 (via IxM motif) and STX5 (via IxM motif); recruits GOSR2 and STX5 into COPII-coated vesicles. Interacts with KCNA3; this interaction is reduced in the presence of KCNE4. As to expression, ubiquitously expressed, with higher amounts in placenta, pancreas, heart and liver.

Its subcellular location is the cytoplasmic vesicle. The protein localises to the COPII-coated vesicle membrane. The protein resides in the endoplasmic reticulum membrane. It localises to the cytoplasm. It is found in the cytosol. Its function is as follows. Component of the coat protein complex II (COPII) which promotes the formation of transport vesicles from the endoplasmic reticulum (ER). The coat has two main functions, the physical deformation of the endoplasmic reticulum membrane into vesicles and the selection of cargo molecules for their transport to the Golgi complex. Plays a central role in cargo selection within the COPII complex and together with SEC24C may have a different specificity compared to SEC24A and SEC24B. May more specifically package GPI-anchored proteins through the cargo receptor TMED10. May also be specific for IxM motif-containing cargos like the SNAREs GOSR2 and STX5. The chain is Protein transport protein Sec24D from Homo sapiens (Human).